The following is a 235-amino-acid chain: Aspartate/glutamate leucyltransferase (235 aa).

Belongs to the R-transferase family. Bpt subfamily.

The protein localises to the cytoplasm. It catalyses the reaction N-terminal L-glutamyl-[protein] + L-leucyl-tRNA(Leu) = N-terminal L-leucyl-L-glutamyl-[protein] + tRNA(Leu) + H(+). It carries out the reaction N-terminal L-aspartyl-[protein] + L-leucyl-tRNA(Leu) = N-terminal L-leucyl-L-aspartyl-[protein] + tRNA(Leu) + H(+). Its function is as follows. Functions in the N-end rule pathway of protein degradation where it conjugates Leu from its aminoacyl-tRNA to the N-termini of proteins containing an N-terminal aspartate or glutamate. This chain is Aspartate/glutamate leucyltransferase, found in Pseudomonas putida (strain GB-1).